A 504-amino-acid polypeptide reads, in one-letter code: Probable chlorophyll(ide) b reductase NYC1, chloroplastic (504 aa).

A chloroplast-targeting transit peptide spans 1–33 (MAAAAVVHLSVHGRLRRSPELHARPYHRPSLLR). A disordered region spans residues 41–63 (ADNGGEEASSSPPPPTTAEARRR). A run of 2 helical transmembrane segments spans residues 114–134 (YVIT…LSGG) and 141–161 (LIWY…ANSV). Position 175–199 (175–199 (ITGSTRGLGKALAREFLLSGDRVVI)) interacts with NAD(+). Y339 functions as the Proton acceptor in the catalytic mechanism. The helical transmembrane segment at 479–499 (WVSVFSLSVVCAFIILSSSGG) threads the bilayer.

The protein belongs to the short-chain dehydrogenases/reductases (SDR) family. As to quaternary structure, interacts with NOL to form a complex that acts as a chlorophyll b reductase. In terms of tissue distribution, expressed in leaves and stems. Also detected in non-photosynthetic tissues such as roots.

Its subcellular location is the plastid. The protein resides in the chloroplast thylakoid membrane. It carries out the reaction 7(1)-hydroxychlorophyllide a + NAD(+) = chlorophyllide b + NADH + H(+). The catalysed reaction is 7(1)-hydroxychlorophyllide a + NADP(+) = chlorophyllide b + NADPH + H(+). Its function is as follows. Required for proper chloroplast degradation. Involved in chlorophyll b degradation. This is Probable chlorophyll(ide) b reductase NYC1, chloroplastic (NYC1) from Oryza sativa subsp. japonica (Rice).